The following is a 396-amino-acid chain: Subtilisin-like protease 5 (396 aa).

Positions M1–A20 are cleaved as a signal peptide. Residues A21–H116 constitute a propeptide that is removed on maturation. Residues Y37–K114 form the Inhibitor I9 domain. A Peptidase S8 domain is found at P125 to R396. Residues D156 and H187 each act as charge relay system in the active site. N-linked (GlcNAc...) asparagine glycosylation is found at N230 and N248. S342 serves as the catalytic Charge relay system. The segment at P376–R396 is disordered. An N-linked (GlcNAc...) asparagine glycan is attached at N392.

This sequence belongs to the peptidase S8 family.

The protein localises to the secreted. Functionally, secreted subtilisin-like serine protease with keratinolytic activity that contributes to pathogenicity. This Arthroderma gypseum (strain ATCC MYA-4604 / CBS 118893) (Microsporum gypseum) protein is Subtilisin-like protease 5 (SUB5).